An 87-amino-acid polypeptide reads, in one-letter code: Probable Fe(2+)-trafficking protein (87 aa).

This sequence belongs to the Fe(2+)-trafficking protein family.

Its function is as follows. Could be a mediator in iron transactions between iron acquisition and iron-requiring processes, such as synthesis and/or repair of Fe-S clusters in biosynthetic enzymes. The sequence is that of Probable Fe(2+)-trafficking protein from Francisella tularensis subsp. mediasiatica (strain FSC147).